Here is a 403-residue protein sequence, read N- to C-terminus: Na(+)-translocating NADH-quinone reductase subunit B (403 aa).

Helical transmembrane passes span 56–76 (IMIM…YNIG), 114–134 (LAMF…TFIV), and 165–185 (LPAT…VVIA). T231 bears the FMN phosphoryl threonine mark. Transmembrane regions (helical) follow at residues 260-280 (GSVG…IIYM), 287-307 (IVLG…VIGS), 312-332 (MFAM…GMFF), 348-368 (WAYG…NPAF), and 371-391 (GMML…YFVA).

It belongs to the NqrB/RnfD family. Composed of six subunits; NqrA, NqrB, NqrC, NqrD, NqrE and NqrF. Requires FMN as cofactor.

It localises to the cell inner membrane. It catalyses the reaction a ubiquinone + n Na(+)(in) + NADH + H(+) = a ubiquinol + n Na(+)(out) + NAD(+). In terms of biological role, NQR complex catalyzes the reduction of ubiquinone-1 to ubiquinol by two successive reactions, coupled with the transport of Na(+) ions from the cytoplasm to the periplasm. NqrA to NqrE are probably involved in the second step, the conversion of ubisemiquinone to ubiquinol. This Pseudoalteromonas atlantica (strain T6c / ATCC BAA-1087) protein is Na(+)-translocating NADH-quinone reductase subunit B.